The chain runs to 487 residues: 3-octaprenyl-4-hydroxybenzoate carboxy-lyase (487 aa).

Asn172 provides a ligand contact to Mn(2+). Prenylated FMN-binding positions include 175–177 (IYR), 189–191 (RWL), and 194–195 (RG). A Mn(2+)-binding site is contributed by Glu238. The active-site Proton donor is Asp287.

The protein belongs to the UbiD family. In terms of assembly, homohexamer. The cofactor is prenylated FMN. It depends on Mn(2+) as a cofactor.

It is found in the cell membrane. The enzyme catalyses a 4-hydroxy-3-(all-trans-polyprenyl)benzoate + H(+) = a 2-(all-trans-polyprenyl)phenol + CO2. The protein operates within cofactor biosynthesis; ubiquinone biosynthesis. In terms of biological role, catalyzes the decarboxylation of 3-octaprenyl-4-hydroxy benzoate to 2-octaprenylphenol, an intermediate step in ubiquinone biosynthesis. This Nitrosomonas europaea (strain ATCC 19718 / CIP 103999 / KCTC 2705 / NBRC 14298) protein is 3-octaprenyl-4-hydroxybenzoate carboxy-lyase.